The following is a 390-amino-acid chain: Guanidine hydrolase (390 aa).

Ni(2+) is bound by residues His174, Asp199, His201, Asp203, Asp291, and Asp293.

Belongs to the arginase family. Homohexamer. The cofactor is Ni(2+).

It localises to the cytoplasm. It carries out the reaction guanidine + H2O = urea + NH4(+). With respect to regulation, activation of GdmH depends on the presence of the accessory proteins GhaA (Sll1078) and GhaB (Sll1079), which load nickel into the active site. Hydrolase activity is slightly activated in the presence of GTP. It does not require ATP or NAD(P)H. Addition of Ca(2+), Mn(2+), Fe(2+) or Fe(3+) has no consistent effects, whereas addition of Co(2+), Cu(2+) or Zn(2+) inhibits the activity. Its function is as follows. Catalyzes the hydrolysis of guanidine into urea and ammonium. Is highly specific for free guanidine. At pH 8, also catalyzes the release of urea from methylguanidine but with significantly reduced specific activity compared with that for guanidine. Cannot hydrolyze guanidinoacetate, guanidinopropionate, guanidinobutyrate, agmatine, arginine or creatine. Required to use guanidine as the sole nitrogen source for growth. Overexpression of the gene accelerates guanidine degradation and promotes biomass growth. This chain is Guanidine hydrolase, found in Synechocystis sp. (strain ATCC 27184 / PCC 6803 / Kazusa).